The chain runs to 668 residues: MERPGLVLQDLPPEILINIFSHLDEKDLFTLQELSTHFRNLIHDEELWKNLFKSRVHTTHFPTFSQSSKFSVEYIERTRGLHHWQHNKAIRTKYTIIPTRNWDQPSIERIVFDYPRVAAYNDGTITILQLQNHKRQKKFKKLIYIPCTTPQGCSTMDFNINAAVFGRFDGRVFGKLLSNKSYLTPVMEFTGRHSAGVTAICNSESWDTSREDWSVSGSENGEIIWWCENKLVKMWKVSNRVIWKLAFFKDWTLIMDDEKLYIIHQMQELHSIDIPKDLDEQPMRVRFFKMDFGSMTLVLADLNNVYTISVNPNGNFGNLRKLEMPEQICAVEIDEKTSQREQNWQFAGDDGCYISLLTTQNTLYIINIRDLSSSGLKVQCKISFDEQVYVSQVTNLIVVVALPNVLQILNAMTGELIKTVLKTEKFPEFLKVSQDKIIMGSGNVLNYLKFVSSDSKKHHHSTKGKNTVSNKWNETLNTELQYYDEDEDLRRKRQSEISRLIDAYGGDLELSGDTDEENDIQLRIALLESQEAQARNQAEAGEPVGDDEDEQLRRALEESQLIYETQTNSSANHGNNTNDEIDEDDEEFLRAIRQSRVEDERRRHLRNHTTGRRNGPLSDDNFATYGAAESSERTSTENTIGSSVGVDASNNVDEDLQLAIALSLSEIN.

In terms of domain architecture, F-box spans 5 to 51 (GLVLQDLPPEILINIFSHLDEKDLFTLQELSTHFRNLIHDEELWKNL). Phosphoserine is present on S511. The residue at position 514 (T514) is a Phosphothreonine. UIM domains lie at 547–566 (DEDE…YETQ), 583–602 (EDDE…DERR), and 651–668 (NVDE…SEIN). The span at 564-578 (ETQTNSSANHGNNTN) shows a compositional bias: polar residues. Disordered regions lie at residues 564 to 585 (ETQT…DEDD) and 599 to 639 (DERR…TENT).

Interacts with SKP1. Component of the probable SCF(UFO1) complex containing CDC53, SKP1, RBX1 and UFO1.

The protein operates within protein modification; protein ubiquitination. In terms of biological role, substrate recognition component of a SCF (SKP1-CUL1-F-box protein) E3 ubiquitin-protein ligase complex which mediates the ubiquitination and subsequent proteasomal degradation of target proteins. Probably recognizes and binds to phosphorylated target proteins. This chain is Ubiquitin ligase complex F-box protein UFO1 (UFO1), found in Saccharomyces cerevisiae (strain ATCC 204508 / S288c) (Baker's yeast).